A 328-amino-acid polypeptide reads, in one-letter code: Ferredoxin--NADP reductase (328 aa).

Residues glutamate 36, glutamine 44, tyrosine 49, valine 89, phenylalanine 123, aspartate 284, and threonine 324 each contribute to the FAD site.

The protein belongs to the ferredoxin--NADP reductase type 2 family. In terms of assembly, homodimer. The cofactor is FAD.

It catalyses the reaction 2 reduced [2Fe-2S]-[ferredoxin] + NADP(+) + H(+) = 2 oxidized [2Fe-2S]-[ferredoxin] + NADPH. This is Ferredoxin--NADP reductase from Lacticaseibacillus paracasei (strain ATCC 334 / BCRC 17002 / CCUG 31169 / CIP 107868 / KCTC 3260 / NRRL B-441) (Lactobacillus paracasei).